Consider the following 381-residue polypeptide: Chorismate synthase (381 aa).

2 residues coordinate NADP(+): Arg-41 and Arg-47. FMN contacts are provided by residues 127-129, 247-248, Gly-291, 306-310, and Arg-332; these read RAS, QA, and KPIPT.

The protein belongs to the chorismate synthase family. Homotetramer. Requires FMNH2 as cofactor.

The enzyme catalyses 5-O-(1-carboxyvinyl)-3-phosphoshikimate = chorismate + phosphate. Its pathway is metabolic intermediate biosynthesis; chorismate biosynthesis; chorismate from D-erythrose 4-phosphate and phosphoenolpyruvate: step 7/7. Catalyzes the anti-1,4-elimination of the C-3 phosphate and the C-6 proR hydrogen from 5-enolpyruvylshikimate-3-phosphate (EPSP) to yield chorismate, which is the branch point compound that serves as the starting substrate for the three terminal pathways of aromatic amino acid biosynthesis. This reaction introduces a second double bond into the aromatic ring system. The protein is Chorismate synthase of Anaeromyxobacter dehalogenans (strain 2CP-1 / ATCC BAA-258).